A 619-amino-acid chain; its full sequence is Chaperone protein HscA homolog (619 aa).

This sequence belongs to the heat shock protein 70 family.

Functionally, chaperone involved in the maturation of iron-sulfur cluster-containing proteins. Has a low intrinsic ATPase activity which is markedly stimulated by HscB. This chain is Chaperone protein HscA homolog, found in Pseudomonas paraeruginosa (strain DSM 24068 / PA7) (Pseudomonas aeruginosa (strain PA7)).